A 387-amino-acid polypeptide reads, in one-letter code: Phosphoglycerate kinase (387 aa).

Substrate-binding positions include 21 to 23, Arg36, and 59 to 62; these read DLN and HLGR. Position 84 is an N6-acetyllysine (Lys84). Substrate contacts are provided by Arg113 and Arg146. ATP-binding positions include Lys197, Glu314, and 340–343; that span reads GGDT.

The protein belongs to the phosphoglycerate kinase family. In terms of assembly, monomer.

The protein resides in the cytoplasm. The catalysed reaction is (2R)-3-phosphoglycerate + ATP = (2R)-3-phospho-glyceroyl phosphate + ADP. Its pathway is carbohydrate degradation; glycolysis; pyruvate from D-glyceraldehyde 3-phosphate: step 2/5. This Escherichia coli O157:H7 protein is Phosphoglycerate kinase (pgk).